We begin with the raw amino-acid sequence, 155 residues long: V-type proton ATPase 16 kDa proteolipid subunit c (155 aa).

Topologically, residues 1–10 are lumenal; the sequence is MADIKNNPEY. A helical membrane pass occupies residues 11 to 33; it reads SSFFGVMGASSAMVFSAMGAAYG. The Cytoplasmic portion of the chain corresponds to 34–55; sequence TAKSGTGIAAMSVMRPELIMKS. A helical membrane pass occupies residues 56–76; that stretch reads IIPVVMAGIIAIYGLVVAVLI. Residues 77 to 92 lie on the Lumenal side of the membrane; that stretch reads ANSLTDGITLYRSFLQ. A helical membrane pass occupies residues 93 to 114; sequence LGAGLSVGLSGLAAGFAIGIVG. Topologically, residues 115–131 are cytoplasmic; the sequence is DAGVRGTAQQPRLFVGM. A helical transmembrane segment spans residues 132-152; it reads ILILIFAEVLGLYGLIVALIL. Residues 153-155 lie on the Lumenal side of the membrane; that stretch reads STK.

Belongs to the V-ATPase proteolipid subunit family. As to quaternary structure, V-ATPase is a heteromultimeric enzyme made up of two complexes: the ATP-hydrolytic V1 complex and the proton translocation V0 complex. The V1 complex consists of three catalytic AB heterodimers that form a heterohexamer, three peripheral stalks each consisting of EG heterodimers, one central rotor including subunits D and F, and the regulatory subunits C and H. The proton translocation complex V0 consists of the proton transport subunit a, a ring of proteolipid subunits c9c'', rotary subunit d, subunits e and f, and the accessory subunits ATP6AP1/Ac45 and ATP6AP2/PRR. Interacts with the V0 complex V-ATPase subunit a4 ATP6V0A4. Interacts with LASS2. Interacts with RNF182; this interaction leads to ubiquitination and degradation via the proteasome pathway. Post-translationally, ubiquitinated by RNF182, leading to its degradation via the ubiquitin-proteasome pathway.

Its subcellular location is the cytoplasmic vesicle. It is found in the clathrin-coated vesicle membrane. The protein resides in the secretory vesicle. It localises to the synaptic vesicle membrane. In terms of biological role, proton-conducting pore forming subunit of the V0 complex of vacuolar(H+)-ATPase (V-ATPase), a multisubunit enzyme composed of a peripheral complex (V1) that hydrolyzes ATP and a membrane integral complex (V0) that translocates protons. V-ATPase is responsible for acidifying and maintaining the pH of intracellular compartments and in some cell types, is targeted to the plasma membrane, where it is responsible for acidifying the extracellular environment. This Mus musculus (Mouse) protein is V-type proton ATPase 16 kDa proteolipid subunit c (Atp6v0c).